A 745-amino-acid chain; its full sequence is Bacteriophage N4 adsorption protein B (745 aa).

Helical transmembrane passes span F8 to I28, I362 to A382, and F393 to L413.

The protein localises to the cell inner membrane. Functionally, required for bacteriophage N4 adsorption. May be a component of the phage receptor. In Escherichia coli O157:H7, this protein is Bacteriophage N4 adsorption protein B (nfrB).